The primary structure comprises 476 residues: Adenylosuccinate synthetase, chloroplastic (476 aa).

Residues 1–20 (AAAAAGRGRSFSPAAPAPSS) are compositionally biased toward low complexity. The interval 1–34 (AAAAAGRGRSFSPAAPAPSSVRLPGRQAPAPAAA) is disordered. Residues 63–69 (GDEGKGK) and 91–93 (GHT) each bind GTP. Aspartate 64 serves as the catalytic Proton acceptor. 2 residues coordinate Mg(2+): aspartate 64 and glycine 91. IMP is bound by residues 64–67 (DEGK), 89–92 (NAGH), threonine 181, arginine 195, glutamine 275, threonine 290, and arginine 354. Histidine 92 serves as the catalytic Proton donor. Residue 350–356 (TTTGRPR) coordinates substrate. GTP-binding positions include arginine 356, 382–384 (KLD), and 465–467 (GVG).

The protein belongs to the adenylosuccinate synthetase family. Homodimer. It depends on Mg(2+) as a cofactor.

It is found in the plastid. The protein resides in the chloroplast. It carries out the reaction IMP + L-aspartate + GTP = N(6)-(1,2-dicarboxyethyl)-AMP + GDP + phosphate + 2 H(+). The protein operates within purine metabolism; AMP biosynthesis via de novo pathway; AMP from IMP: step 1/2. In terms of biological role, plays an important role in the de novo pathway and in the salvage pathway of purine nucleotide biosynthesis. Catalyzes the first committed step in the biosynthesis of AMP from IMP. This chain is Adenylosuccinate synthetase, chloroplastic, found in Triticum aestivum (Wheat).